The sequence spans 490 residues: GTPase Der (490 aa).

2 consecutive EngA-type G domains span residues 3–166 (PVVA…AEAM) and 200–373 (IKLA…DSAT). GTP contacts are provided by residues 9 to 16 (GRPNVGKS), 56 to 60 (DTGGI), 118 to 121 (NKVD), 206 to 213 (GKPNVGKS), 253 to 257 (DTAGV), and 318 to 321 (NKWD). The KH-like domain occupies 374–458 (RRVSTSMLTR…PIQLRFQEGG (85 aa)). The interval 470–490 (TVSQERRRKRMVGHIRDKNKD) is disordered.

It belongs to the TRAFAC class TrmE-Era-EngA-EngB-Septin-like GTPase superfamily. EngA (Der) GTPase family. As to quaternary structure, associates with the 50S ribosomal subunit.

GTPase that plays an essential role in the late steps of ribosome biogenesis. In Shewanella pealeana (strain ATCC 700345 / ANG-SQ1), this protein is GTPase Der.